A 219-amino-acid polypeptide reads, in one-letter code: Phosphatidylinositol phosphate synthase (219 aa).

A CDP-1,2-diacyl-sn-glycerol is bound at residue 29–32 (NQLT). Transmembrane regions (helical) follow at residues 31-47 (LTLV…LLLI) and 53-72 (IWAA…DGTV). Mg(2+) is bound by residues Asp66 and Asp69. Gly70, Arg74, and Thr80 together coordinate a CDP-1,2-diacyl-sn-glycerol. Asp87 and Asp91 together coordinate Mg(2+). Residue Asp91 is the Proton acceptor of the active site. The next 4 membrane-spanning stretches (helical) occupy residues 93 to 110 (ITDG…VYSY), 116 to 133 (LVAA…ISYV), 154 to 171 (RLIV…GVPY), and 177 to 194 (LWAL…RLVM).

The protein belongs to the CDP-alcohol phosphatidyltransferase class-I family. In terms of assembly, homodimer. Requires Mg(2+) as cofactor.

The protein localises to the cell membrane. The enzyme catalyses a CDP-1,2-diacyl-sn-glycerol + 1D-myo-inositol 3-phosphate = a 1,2-diacyl-sn-glycero-3-phospho-(1D-myo-inositol-3-phosphate) + CMP + H(+). It catalyses the reaction 1,2-di-(9Z-octadecenoyl)-sn-glycero-3-cytidine-5'-diphosphate + 1D-myo-inositol 3-phosphate = 1,2-di-(9Z-octadecenoyl)-sn-glycero-3-phospho-(1D-myo-inositol-3-phosphate) + CMP + H(+). The protein operates within phospholipid metabolism; phosphatidylinositol phosphate biosynthesis. Its function is as follows. Catalyzes the conjugation of the 1'-hydroxyl group of D-myo-inositol-3-phosphate (also named L-myo-inositol-1-phosphate) with a lipid tail of cytidine diphosphate diacylglycerol (CDP-DAG), forming phosphatidylinositol phosphate (PIP) and CMP. PIP is a precursor of phosphatidylinositol (PI) which is an essential lipid required for cell wall formation. This chain is Phosphatidylinositol phosphate synthase, found in Corynebacterium glutamicum (strain ATCC 13032 / DSM 20300 / JCM 1318 / BCRC 11384 / CCUG 27702 / LMG 3730 / NBRC 12168 / NCIMB 10025 / NRRL B-2784 / 534).